The following is a 209-amino-acid chain: ATP synthase subunit O, mitochondrial (209 aa).

This sequence belongs to the ATPase delta chain family. As to quaternary structure, F-type ATPases have 2 components, CF(1) - the catalytic core - and CF(0) - the membrane proton channel. CF(1) has five subunits: alpha(3), beta(3), gamma(1), delta(1), epsilon(1). CF(0) has three main subunits: a, b and c.

It localises to the mitochondrion. Its subcellular location is the mitochondrion inner membrane. Mitochondrial membrane ATP synthase (F(1)F(0) ATP synthase or Complex V) produces ATP from ADP in the presence of a proton gradient across the membrane which is generated by electron transport complexes of the respiratory chain. F-type ATPases consist of two structural domains, F(1) - containing the extramembraneous catalytic core and F(0) - containing the membrane proton channel, linked together by a central stalk and a peripheral stalk. During catalysis, ATP synthesis in the catalytic domain of F(1) is coupled via a rotary mechanism of the central stalk subunits to proton translocation. Part of the complex F(0) domain and the peripheric stalk, which acts as a stator to hold the catalytic alpha(3)beta(3) subcomplex and subunit a/ATP6 static relative to the rotary elements. The polypeptide is ATP synthase subunit O, mitochondrial (Drosophila melanogaster (Fruit fly)).